The primary structure comprises 339 residues: 5-dehydro-2-deoxygluconokinase (339 aa).

This sequence belongs to the carbohydrate kinase PfkB family.

The catalysed reaction is 5-dehydro-2-deoxy-D-gluconate + ATP = 6-phospho-5-dehydro-2-deoxy-D-gluconate + ADP + H(+). It functions in the pathway polyol metabolism; myo-inositol degradation into acetyl-CoA; acetyl-CoA from myo-inositol: step 5/7. In terms of biological role, catalyzes the phosphorylation of 5-dehydro-2-deoxy-D-gluconate (2-deoxy-5-keto-D-gluconate or DKG) to 6-phospho-5-dehydro-2-deoxy-D-gluconate (DKGP). This Clostridium tetani (strain Massachusetts / E88) protein is 5-dehydro-2-deoxygluconokinase.